Reading from the N-terminus, the 331-residue chain is 6-phosphogluconolactonase (331 aa).

Belongs to the cycloisomerase 2 family.

The catalysed reaction is 6-phospho-D-glucono-1,5-lactone + H2O = 6-phospho-D-gluconate + H(+). Its pathway is carbohydrate degradation; pentose phosphate pathway; D-ribulose 5-phosphate from D-glucose 6-phosphate (oxidative stage): step 2/3. Its function is as follows. Catalyzes the hydrolysis of 6-phosphogluconolactone to 6-phosphogluconate. The sequence is that of 6-phosphogluconolactonase from Enterobacter sp. (strain 638).